The primary structure comprises 217 residues: Nucleoside diphosphate kinase homolog 5 (217 aa).

The tract at residues 18–151 (ERTLALIKPD…REIRFMFPHS (134 aa)) is NDK.

Belongs to the NDK family.

It localises to the cell projection. Its subcellular location is the cilium. In terms of biological role, functions as part of axonemal radial spoke complexes that play an important part in the motility of sperm and cilia. Does not seem to have nucleoside diphosphate kinase (NDPK) activity. Exhibits a 3'-5' exonuclease activity with a preference for single-stranded DNA, suggesting roles in DNA proofreading and repair. In Danio rerio (Zebrafish), this protein is Nucleoside diphosphate kinase homolog 5 (nme5).